The primary structure comprises 547 residues: Chaperonin GroEL (547 aa).

Residues 30–33 (TLGP), Lys51, 87–91 (DGTTT), Gly415, 479–481 (DAA), and Asp495 contribute to the ATP site.

Belongs to the chaperonin (HSP60) family. As to quaternary structure, forms a cylinder of 14 subunits composed of two heptameric rings stacked back-to-back. Interacts with the co-chaperonin GroES.

The protein resides in the cytoplasm. It catalyses the reaction ATP + H2O + a folded polypeptide = ADP + phosphate + an unfolded polypeptide.. Its function is as follows. Together with its co-chaperonin GroES, plays an essential role in assisting protein folding. The GroEL-GroES system forms a nano-cage that allows encapsulation of the non-native substrate proteins and provides a physical environment optimized to promote and accelerate protein folding. This chain is Chaperonin GroEL, found in Dichelobacter nodosus (strain VCS1703A).